The following is a 751-amino-acid chain: Lysine decarboxylase LdcA (751 aa).

Belongs to the Orn/Lys/Arg decarboxylase class-I family. As to quaternary structure, homodecamer.

The catalysed reaction is L-lysine + H(+) = cadaverine + CO2. Functionally, plays an essential role in lysine utilization by acting as a lysine decarboxylase. In Pseudomonas aeruginosa (strain ATCC 15692 / DSM 22644 / CIP 104116 / JCM 14847 / LMG 12228 / 1C / PRS 101 / PAO1), this protein is Lysine decarboxylase LdcA.